The sequence spans 276 residues: Undecaprenyl-diphosphatase (276 aa).

5 consecutive transmembrane segments (helical) span residues 84–104, 115–135, 188–208, 222–242, and 250–270; these read YRLG…GLFF, LWVV…AEYV, FGFL…LPDA, QLLV…AWLL, and MYWF…LLAT.

Belongs to the UppP family.

It is found in the cell membrane. It catalyses the reaction di-trans,octa-cis-undecaprenyl diphosphate + H2O = di-trans,octa-cis-undecaprenyl phosphate + phosphate + H(+). Functionally, catalyzes the dephosphorylation of undecaprenyl diphosphate (UPP). Confers resistance to bacitracin. This Mycobacterium bovis (strain ATCC BAA-935 / AF2122/97) protein is Undecaprenyl-diphosphatase.